Consider the following 255-residue polypeptide: Triosephosphate isomerase (255 aa).

10 to 12 contributes to the substrate binding site; it reads NWK. Histidine 96 acts as the Electrophile in catalysis. Catalysis depends on glutamate 168, which acts as the Proton acceptor. Substrate contacts are provided by residues glycine 174, serine 213, and 234–235; that span reads GG.

It belongs to the triosephosphate isomerase family. In terms of assembly, homodimer.

The protein localises to the cytoplasm. It catalyses the reaction D-glyceraldehyde 3-phosphate = dihydroxyacetone phosphate. It participates in carbohydrate biosynthesis; gluconeogenesis. The protein operates within carbohydrate degradation; glycolysis; D-glyceraldehyde 3-phosphate from glycerone phosphate: step 1/1. Involved in the gluconeogenesis. Catalyzes stereospecifically the conversion of dihydroxyacetone phosphate (DHAP) to D-glyceraldehyde-3-phosphate (G3P). This chain is Triosephosphate isomerase, found in Histophilus somni (strain 2336) (Haemophilus somnus).